A 191-amino-acid chain; its full sequence is Large ribosomal subunit protein uL5 (191 aa).

It belongs to the universal ribosomal protein uL5 family. Part of the 50S ribosomal subunit; part of the 5S rRNA/L5/L18/L25 subcomplex. Contacts the 5S rRNA and the P site tRNA. Forms a bridge to the 30S subunit in the 70S ribosome.

In terms of biological role, this is one of the proteins that bind and probably mediate the attachment of the 5S RNA into the large ribosomal subunit, where it forms part of the central protuberance. In the 70S ribosome it contacts protein S13 of the 30S subunit (bridge B1b), connecting the 2 subunits; this bridge is implicated in subunit movement. Contacts the P site tRNA; the 5S rRNA and some of its associated proteins might help stabilize positioning of ribosome-bound tRNAs. In Salinibacter ruber (strain DSM 13855 / M31), this protein is Large ribosomal subunit protein uL5.